The sequence spans 899 residues: Androgen receptor (899 aa).

Residues 1-537 form a modulating region; sequence MEVQLGLGRV…PIDYYFPPQK (537 aa). The interaction with ZNF318 stretch occupies residues 1 to 566; sequence MEVQLGLGRV…GSCKVFFKRA (566 aa). Disordered stretches follow at residues 35–146 and 175–222; these read QNPG…LSLL and QQQQ…LGGN. At Ser61 the chain carries Phosphoserine; by CDK9. At Ser75 the chain carries Phosphoserine. 2 stretches are compositionally biased toward low complexity: residues 94–103 and 175–193; these read QPSQQQAASE and QQQQQQQHQQQHQQHQQQQ. Positions 210-222 are enriched in polar residues; it reads APSSSKDSYLGGN. Tyr218 carries the post-translational modification Phosphotyrosine; by CSK. Position 251 is a phosphoserine (Ser251). Tyr262 is modified (phosphotyrosine; by CSK and TNK2). 4 positions are modified to phosphotyrosine; by CSK: Tyr302, Tyr341, Tyr352, and Tyr357. A Phosphotyrosine; by CSK and TNK2 modification is found at Tyr358. Lys381 is covalently cross-linked (Glycyl lysine isopeptide (Lys-Gly) (interchain with G-Cter in SUMO)). Phosphotyrosine; by CSK is present on Tyr388. The disordered stretch occupies residues 436–471; the sequence is EGQLYGPGGGGGSSSPSDAGPVAPYGYTRPPQGLTS. A Glycyl lysine isopeptide (Lys-Gly) (interchain with G-Cter in SUMO) cross-link involves residue Lys500. Residues Tyr514 and Tyr531 each carry the phosphotyrosine; by CSK modification. Positions 531-898 are interaction with LPXN; that stretch reads YYFPPQKTCL…GKVKPIYFHT (368 aa). The segment at residues 538–611 is a DNA-binding region (nuclear receptor); it reads TCLICGDEAS…AGMTLGARKL (74 aa). NR C4-type zinc fingers lie at residues 539 to 559 and 575 to 599; these read CLICGDEASGCHYGALTCGSC and CASRNDCTIDKFRRKNCPSCRLRKC. An interaction with HIPK3 region spans residues 551–641; it reads YGALTCGSCK…TEDPSQKMTV (91 aa). The tract at residues 571–898 is interaction with CCAR1; it reads QKYLCASRND…GKVKPIYFHT (328 aa). The interval 604–898 is interaction with KAT7; it reads MTLGARKLKK…GKVKPIYFHT (295 aa). Ser630 bears the Phosphoserine mark. Residues 648 to 879 form the NR LBD domain; the sequence is ECQPIFLNVL…DFPEMMAEII (232 aa). Asn685 and Arg732 together coordinate 17beta-hydroxy-5alpha-androstan-3-one. Residues Lys825 and Lys827 each participate in a glycyl lysine isopeptide (Lys-Gly) (interchain with G-Cter in ubiquitin) cross-link. Residue Thr857 participates in 17beta-hydroxy-5alpha-androstan-3-one binding. The residue at position 895 (Tyr895) is a Phosphotyrosine; by CSK.

This sequence belongs to the nuclear hormone receptor family. NR3 subfamily. As to quaternary structure, binds DNA as a homodimer. Part of a ternary complex containing AR, EFCAB6/DJBP and PARK7. Interacts with HIPK3 and NR0B2 in the presence of androgen. The ligand binding domain interacts with KAT7/HBO1 in the presence of dihydrotestosterone. Interacts with EFCAB6/DJBP, PQBP1, RANBP9, SPDEF, SRA1, TGFB1I1, ZNF318 and RREB1. The AR N-terminal poly-Gln region binds Ran resulting in enhancement of AR-mediated transactivation. Ran-binding decreases as the poly-Gln length increases. Interacts with ZMIZ1/ZIMP10 and ZMIZ2/ZMIP7 which both enhance its transactivation activity. Interacts with RBAK. Interacts via the ligand-binding domain with LXXLL and FXXLF motifs from NCOA1, NCOA2, NCOA3 and MAGEA11. Interacts (via nuclear receptor DNA binding domain and nuclear receptor ligand binding domain) with NCOA4. Interacts with HIP1 (via coiled coil domain). Interacts with SLC30A9 and RAD54L2/ARIP4. Interacts with MACROD1 (via macro domain). Interacts (via ligand-binding domain) with TRIM68. Interacts with TNK2. Interacts with USP26. Interacts with RNF6. Interacts (regulated by RNF6 probably through polyubiquitination) with RNF14; regulates AR transcriptional activity. Interacts with PRMT2 and TRIM24. Interacts with RACK1. Interacts with RANBP10; this interaction enhances hormone-induced AR transcriptional activity. Interacts with PRPF6 in a hormone-independent way; this interaction enhances hormone-induced AR transcriptional activity. Interacts with STK4/MST1. Interacts with ZIPK/DAPK3. Interacts with LPXN. Interacts with MAK. Part of a complex containing AR, MAK and NCOA3. Interacts with CRY1. Interacts with CCAR1 and GATA2. Interacts with BUD31. Interacts with ARID4A. Interacts with ARID4B. Interacts (via NR LBD domain) with ZBTB7A; the interaction is direct and androgen-dependent. Interacts with NCOR1. Interacts with NCOR2. Interacts with CRY2 in a ligand-dependent manner. In terms of processing, phosphorylated in prostate cancer cells in response to several growth factors including EGF. Phosphorylation is induced by c-Src kinase (CSK). Tyr-514 is one of the major phosphorylation sites and an increase in phosphorylation and Src kinase activity is associated with prostate cancer progression. Phosphorylation by TNK2 enhances the DNA-binding and transcriptional activity. Phosphorylation at Ser-61 by CDK9 regulates AR promoter selectivity and cell growth. Phosphorylation by PAK6 leads to AR-mediated transcription inhibition. Post-translationally, sumoylated on Lys-381 (major) and Lys-500. Ubiquitinated. Deubiquitinated by USP26. 'Lys-6' and 'Lys-27'-linked polyubiquitination by RNF6 modulates AR transcriptional activity and specificity. Palmitoylated by ZDHHC7 and ZDHHC21. Palmitoylation is required for plasma membrane targeting and for rapid intracellular signaling via ERK and AKT kinases and cAMP generation.

Its subcellular location is the nucleus. The protein localises to the cytoplasm. Steroid hormone receptors are ligand-activated transcription factors that regulate eukaryotic gene expression and affect cellular proliferation and differentiation in target tissues. Transcription factor activity is modulated by bound coactivator and corepressor proteins like ZBTB7A that recruits NCOR1 and NCOR2 to the androgen response elements/ARE on target genes, negatively regulating androgen receptor signaling and androgen-induced cell proliferation. Transcription activation is also down-regulated by NR0B2. Activated, but not phosphorylated, by HIPK3 and ZIPK/DAPK3. The chain is Androgen receptor (Ar) from Mus musculus (Mouse).